The primary structure comprises 473 residues: Argininosuccinate lyase (473 aa).

S34, N121, and T166 together coordinate 2-(N(omega)-L-arginino)succinate. Residue H167 is the Proton acceptor of the active site. S289 functions as the Proton donor in the catalytic mechanism. 2-(N(omega)-L-arginino)succinate-binding residues include N297, Y329, and Q334.

This sequence belongs to the lyase 1 family. Argininosuccinate lyase subfamily.

The enzyme catalyses 2-(N(omega)-L-arginino)succinate = fumarate + L-arginine. It participates in amino-acid biosynthesis; L-arginine biosynthesis; L-arginine from L-ornithine and carbamoyl phosphate: step 3/3. The polypeptide is Argininosuccinate lyase (ARG7) (Chlamydomonas reinhardtii (Chlamydomonas smithii)).